Here is a 261-residue protein sequence, read N- to C-terminus: MTHQTHAYHMVNPSPWPLTGALSALLMTSGLIMWFHFNSTILLMLGLTTNMLTMYQWWRDIIRESTFQGHHTPTVQKGLRYGMILFIISEVLFFTGFFWAFYHSSLAPTPELGGCWPPTGIHPLNPLEVPLLNTSVLLASGVSITWAHHSLMEGNRNHMLQALFITIALGVYFTLLQASEYYEAPFTISDGVYGSTFFVATGFHGLHVIIGSTFLIVCFFRQLKFHFTSSHHFGFEAAAWYWHFVDVVWLFLYVSIYWWGS.

The Mitochondrial matrix segment spans residues Met1 to Pro15. A helical membrane pass occupies residues Trp16–Trp34. The Mitochondrial intermembrane segment spans residues Phe35 to Thr40. Residues Ile41–Thr66 form a helical membrane-spanning segment. At Phe67–Thr72 the chain is on the mitochondrial matrix side. Residues Pro73 to Ser105 form a helical membrane-spanning segment. Residues Leu106–Glu128 lie on the Mitochondrial intermembrane side of the membrane. A helical transmembrane segment spans residues Val129–Met152. Residues Glu153–Asn155 are Mitochondrial matrix-facing. Residues Arg156–Glu183 form a helical membrane-spanning segment. Residues Ala184–Asp190 are Mitochondrial intermembrane-facing. The helical transmembrane segment at Gly191–Leu223 threads the bilayer. Topologically, residues Lys224–His232 are mitochondrial matrix. The chain crosses the membrane as a helical span at residues Phe233–Ile256. Topologically, residues Tyr257–Ser261 are mitochondrial intermembrane.

It belongs to the cytochrome c oxidase subunit 3 family. In terms of assembly, component of the cytochrome c oxidase (complex IV, CIV), a multisubunit enzyme composed of 14 subunits. The complex is composed of a catalytic core of 3 subunits MT-CO1, MT-CO2 and MT-CO3, encoded in the mitochondrial DNA, and 11 supernumerary subunits COX4I, COX5A, COX5B, COX6A, COX6B, COX6C, COX7A, COX7B, COX7C, COX8 and NDUFA4, which are encoded in the nuclear genome. The complex exists as a monomer or a dimer and forms supercomplexes (SCs) in the inner mitochondrial membrane with NADH-ubiquinone oxidoreductase (complex I, CI) and ubiquinol-cytochrome c oxidoreductase (cytochrome b-c1 complex, complex III, CIII), resulting in different assemblies (supercomplex SCI(1)III(2)IV(1) and megacomplex MCI(2)III(2)IV(2)).

Its subcellular location is the mitochondrion inner membrane. It carries out the reaction 4 Fe(II)-[cytochrome c] + O2 + 8 H(+)(in) = 4 Fe(III)-[cytochrome c] + 2 H2O + 4 H(+)(out). Component of the cytochrome c oxidase, the last enzyme in the mitochondrial electron transport chain which drives oxidative phosphorylation. The respiratory chain contains 3 multisubunit complexes succinate dehydrogenase (complex II, CII), ubiquinol-cytochrome c oxidoreductase (cytochrome b-c1 complex, complex III, CIII) and cytochrome c oxidase (complex IV, CIV), that cooperate to transfer electrons derived from NADH and succinate to molecular oxygen, creating an electrochemical gradient over the inner membrane that drives transmembrane transport and the ATP synthase. Cytochrome c oxidase is the component of the respiratory chain that catalyzes the reduction of oxygen to water. Electrons originating from reduced cytochrome c in the intermembrane space (IMS) are transferred via the dinuclear copper A center (CU(A)) of subunit 2 and heme A of subunit 1 to the active site in subunit 1, a binuclear center (BNC) formed by heme A3 and copper B (CU(B)). The BNC reduces molecular oxygen to 2 water molecules using 4 electrons from cytochrome c in the IMS and 4 protons from the mitochondrial matrix. In Aepyceros melampus (Impala), this protein is Cytochrome c oxidase subunit 3 (MT-CO3).